Here is a 475-residue protein sequence, read N- to C-terminus: Siroheme synthase (475 aa).

The tract at residues 1-204 (MDYLPVFLNI…GRDQAAQDYL (204 aa)) is precorrin-2 dehydrogenase /sirohydrochlorin ferrochelatase. NAD(+) is bound by residues 22–23 (EI) and 43–44 (PA). Ser129 is subject to Phosphoserine. Residues 218-475 (GEVYLVGAGP…MGTSSGPGYP (258 aa)) form a uroporphyrinogen-III C-methyltransferase region. S-adenosyl-L-methionine is bound at residue Pro227. The active-site Proton acceptor is Asp250. The Proton donor role is filled by Lys272. S-adenosyl-L-methionine-binding positions include 303–305 (GGD), Ile308, 333–334 (TA), Met385, and Gly414.

In the N-terminal section; belongs to the precorrin-2 dehydrogenase / sirohydrochlorin ferrochelatase family. This sequence in the C-terminal section; belongs to the precorrin methyltransferase family.

It carries out the reaction uroporphyrinogen III + 2 S-adenosyl-L-methionine = precorrin-2 + 2 S-adenosyl-L-homocysteine + H(+). The enzyme catalyses precorrin-2 + NAD(+) = sirohydrochlorin + NADH + 2 H(+). It catalyses the reaction siroheme + 2 H(+) = sirohydrochlorin + Fe(2+). Its pathway is cofactor biosynthesis; adenosylcobalamin biosynthesis; precorrin-2 from uroporphyrinogen III: step 1/1. It functions in the pathway cofactor biosynthesis; adenosylcobalamin biosynthesis; sirohydrochlorin from precorrin-2: step 1/1. The protein operates within porphyrin-containing compound metabolism; siroheme biosynthesis; precorrin-2 from uroporphyrinogen III: step 1/1. It participates in porphyrin-containing compound metabolism; siroheme biosynthesis; siroheme from sirohydrochlorin: step 1/1. Its pathway is porphyrin-containing compound metabolism; siroheme biosynthesis; sirohydrochlorin from precorrin-2: step 1/1. Its function is as follows. Multifunctional enzyme that catalyzes the SAM-dependent methylations of uroporphyrinogen III at position C-2 and C-7 to form precorrin-2 via precorrin-1. Then it catalyzes the NAD-dependent ring dehydrogenation of precorrin-2 to yield sirohydrochlorin. Finally, it catalyzes the ferrochelation of sirohydrochlorin to yield siroheme. In Nitrosomonas europaea (strain ATCC 19718 / CIP 103999 / KCTC 2705 / NBRC 14298), this protein is Siroheme synthase.